A 241-amino-acid chain; its full sequence is 1-(5-phosphoribosyl)-5-[(5-phosphoribosylamino)methylideneamino] imidazole-4-carboxamide isomerase (241 aa).

D8 (proton acceptor) is an active-site residue. Catalysis depends on D130, which acts as the Proton donor.

This sequence belongs to the HisA/HisF family.

It is found in the cytoplasm. It carries out the reaction 1-(5-phospho-beta-D-ribosyl)-5-[(5-phospho-beta-D-ribosylamino)methylideneamino]imidazole-4-carboxamide = 5-[(5-phospho-1-deoxy-D-ribulos-1-ylimino)methylamino]-1-(5-phospho-beta-D-ribosyl)imidazole-4-carboxamide. It functions in the pathway amino-acid biosynthesis; L-histidine biosynthesis; L-histidine from 5-phospho-alpha-D-ribose 1-diphosphate: step 4/9. In Leptospira interrogans serogroup Icterohaemorrhagiae serovar copenhageni (strain Fiocruz L1-130), this protein is 1-(5-phosphoribosyl)-5-[(5-phosphoribosylamino)methylideneamino] imidazole-4-carboxamide isomerase.